The following is a 282-amino-acid chain: Probable protein phosphatase 2C 10 (282 aa).

Residues 34 to 281 (KFGYSLVKGK…DDISCIVVRL (248 aa)) enclose the PPM-type phosphatase domain. Positions 71, 72, 233, and 272 each coordinate Mn(2+).

It belongs to the PP2C family. Mg(2+) is required as a cofactor. The cofactor is Mn(2+).

It catalyses the reaction O-phospho-L-seryl-[protein] + H2O = L-seryl-[protein] + phosphate. The catalysed reaction is O-phospho-L-threonyl-[protein] + H2O = L-threonyl-[protein] + phosphate. In Arabidopsis thaliana (Mouse-ear cress), this protein is Probable protein phosphatase 2C 10.